The sequence spans 156 residues: Small ribosomal subunit protein uS7 (156 aa).

This sequence belongs to the universal ribosomal protein uS7 family. In terms of assembly, part of the 30S ribosomal subunit. Contacts proteins S9 and S11.

Functionally, one of the primary rRNA binding proteins, it binds directly to 16S rRNA where it nucleates assembly of the head domain of the 30S subunit. Is located at the subunit interface close to the decoding center, probably blocks exit of the E-site tRNA. This chain is Small ribosomal subunit protein uS7, found in Shewanella denitrificans (strain OS217 / ATCC BAA-1090 / DSM 15013).